The primary structure comprises 270 residues: Type III pantothenate kinase (270 aa).

Position 11-18 (11-18 (DAGNSRIK)) interacts with ATP. Substrate-binding positions include Tyr-96 and 103-106 (GSDR). Catalysis depends on Asp-105, which acts as the Proton acceptor. Thr-129 is a binding site for ATP. Residue Thr-195 coordinates substrate.

Belongs to the type III pantothenate kinase family. In terms of assembly, homodimer. NH4(+) serves as cofactor. It depends on K(+) as a cofactor.

Its subcellular location is the cytoplasm. The catalysed reaction is (R)-pantothenate + ATP = (R)-4'-phosphopantothenate + ADP + H(+). The protein operates within cofactor biosynthesis; coenzyme A biosynthesis; CoA from (R)-pantothenate: step 1/5. Its function is as follows. Catalyzes the phosphorylation of pantothenate (Pan), the first step in CoA biosynthesis. The protein is Type III pantothenate kinase of Paraburkholderia xenovorans (strain LB400).